We begin with the raw amino-acid sequence, 405 residues long: S-adenosylmethionine synthase (405 aa).

Residue 139-144 (GKGSAD) participates in ATP binding.

The protein belongs to the AdoMet synthase 2 family. Requires Mg(2+) as cofactor.

It catalyses the reaction L-methionine + ATP + H2O = S-adenosyl-L-methionine + phosphate + diphosphate. Its pathway is amino-acid biosynthesis; S-adenosyl-L-methionine biosynthesis; S-adenosyl-L-methionine from L-methionine: step 1/1. Functionally, catalyzes the formation of S-adenosylmethionine from methionine and ATP. The polypeptide is S-adenosylmethionine synthase (Sulfurisphaera tokodaii (strain DSM 16993 / JCM 10545 / NBRC 100140 / 7) (Sulfolobus tokodaii)).